Reading from the N-terminus, the 175-residue chain is uncharacterized protein (175 aa).

The span at 1-10 (MSKKINNNKT) shows a compositional bias: polar residues. The disordered stretch occupies residues 1–21 (MSKKINNNKTPRNKVKNNNVS).

This is an uncharacterized protein from Ureaplasma parvum serovar 3 (strain ATCC 700970).